An 807-amino-acid polypeptide reads, in one-letter code: Glycerol-3-phosphate acyltransferase (807 aa).

Residues 305–310 (CHRSHM) carry the HXXXXD motif motif.

This sequence belongs to the GPAT/DAPAT family.

It localises to the cell inner membrane. It carries out the reaction sn-glycerol 3-phosphate + an acyl-CoA = a 1-acyl-sn-glycero-3-phosphate + CoA. The protein operates within phospholipid metabolism; CDP-diacylglycerol biosynthesis; CDP-diacylglycerol from sn-glycerol 3-phosphate: step 1/3. The sequence is that of Glycerol-3-phosphate acyltransferase from Klebsiella pneumoniae (strain 342).